The primary structure comprises 142 residues: MKTFTAKPETVKRDWYVVDANGKTLGRLATELASRLRGKHKAEYTPHVDTGDYIIVLNAEKVAVTGNKRTDKIYYRHTGHIGGIKQATFEEMIARSPERVIEIAVKGMLPKGPLGRAMYRKLKVYAGTEHNHAAQQPQVLDI.

This sequence belongs to the universal ribosomal protein uL13 family. Part of the 50S ribosomal subunit.

This protein is one of the early assembly proteins of the 50S ribosomal subunit, although it is not seen to bind rRNA by itself. It is important during the early stages of 50S assembly. The sequence is that of Large ribosomal subunit protein uL13 from Yersinia enterocolitica serotype O:8 / biotype 1B (strain NCTC 13174 / 8081).